We begin with the raw amino-acid sequence, 1539 residues long: Lysine-specific demethylase 5D (1539 aa).

The JmjN domain occupies 14 to 55 (CPVFEPSWAEFQDPLGYIAKIRPIAEKSGICKIRPPADWQPP). Positions 79-169 (TRVKLNYLDQ…IIYPYEMFQS (91 aa)) constitute an ARID domain. The tract at residues 192–228 (PHSIPLRQSVQPSKFSSYSRRAKRLQPDPEPTEEDIE) is disordered. Residues 197-210 (LRQSVQPSKFSSYS) show a composition bias toward polar residues. Glycyl lysine isopeptide (Lys-Gly) (interchain with G-Cter in SUMO2) cross-links involve residues K205, K229, K244, and K272. Residues S291 and S307 each carry the phosphoserine modification. A PHD-type 1 zinc finger spans residues 316–362 (ICQVCSRGDEDDKLLFCDGCDDNYHIFCLLPPLPEIPRGIWRCPKCI). Residue Y430 participates in 2-oxoglutarate binding. Residues 458-624 (EYATSGWNLN…AGRQCIEHYR (167 aa)) form the JmjC domain. Positions 504 and 506 each coordinate Fe cation. The 2-oxoglutarate site is built by S512, N514, and K522. Residue H592 participates in Fe cation binding. Residues 697-749 (CIKCKTTCFLSALACYDCPDGLVCLSHINDLCKCSSSRQYLRYRYTLDELPTM) form a C5HC2 zinc finger. S884 is modified (phosphoserine). Residues 1174–1235 (ICVCGQVPAG…DTKFLCPLCM (62 aa)) form a PHD-type 2 zinc finger. Position 1346 is a phosphoserine (S1346). The interval 1429–1521 (HQGSRTRSRA…QHKDSGSSAA (93 aa)) is disordered. Positions 1432–1446 (SRTRSRALERRRRRQ) are enriched in basic residues. Over residues 1477 to 1491 (GREEEHYQEKADREN) the composition is skewed to basic and acidic residues. A compositionally biased stretch (polar residues) spans 1494–1521 (LTPSTDHSPFLKGNQNSLQHKDSGSSAA).

It belongs to the JARID1 histone demethylase family. Interacts with PCGF6, MSH5, ZMYND8, AR. It depends on L-ascorbate as a cofactor. Requires Fe(2+) as cofactor. Expression is highly down-regulated in metastatic prostate tumors.

The protein resides in the nucleus. The enzyme catalyses N(6),N(6),N(6)-trimethyl-L-lysyl(4)-[histone H3] + 3 2-oxoglutarate + 3 O2 = L-lysyl(4)-[histone H3] + 3 formaldehyde + 3 succinate + 3 CO2. Functionally, histone demethylase that specifically demethylates 'Lys-4' of histone H3, thereby playing a central role in histone code. Does not demethylate histone H3 'Lys-9', H3 'Lys-27', H3 'Lys-36', H3 'Lys-79' or H4 'Lys-20'. Demethylates trimethylated and dimethylated but not monomethylated H3 'Lys-4'. May play a role in spermatogenesis. Involved in transcriptional repression of diverse metastasis-associated genes; in this function seems to cooperate with ZMYND8. Suppresses prostate cancer cell invasion. Regulates androgen receptor (AR) transcriptional activity by demethylating H3K4me3 active transcription marks. The protein is Lysine-specific demethylase 5D (KDM5D) of Homo sapiens (Human).